The following is a 61-amino-acid chain: Insect toxin LqhIT5 (61 aa).

One can recognise an LCN-type CS-alpha/beta domain in the interval 1–61; it reads DGYIRGGDGC…EWKYETNTCG (61 aa). Intrachain disulfides connect cysteine 10–cysteine 60, cysteine 14–cysteine 35, cysteine 21–cysteine 42, and cysteine 25–cysteine 44.

This sequence belongs to the long (4 C-C) scorpion toxin superfamily. Sodium channel inhibitor family. Beta subfamily. Expressed by the venom gland.

It localises to the secreted. Excitatory insect beta-toxins induce a spastic paralysis. They bind voltage-independently at site-4 of sodium channels (Nav) and shift the voltage of activation toward more negative potentials thereby affecting sodium channel activation and promoting spontaneous and repetitive firing. This toxin is active only on insects. It operates by inducing a fast contraction paralysis without depressant activity. It is more similar to the excitatory toxins in its mode of action and the depressant toxins in its primary structure. In Leiurus hebraeus (Hebrew deathstalker scorpion), this protein is Insect toxin LqhIT5.